Consider the following 430-residue polypeptide: Enolase (430 aa).

A (2R)-2-phosphoglycerate-binding site is contributed by Gln-163. The active-site Proton donor is Glu-205. The Mg(2+) site is built by Asp-242, Glu-287, and Asp-314. (2R)-2-phosphoglycerate is bound by residues Lys-339, Arg-368, Ser-369, and Lys-390. Lys-339 serves as the catalytic Proton acceptor.

It belongs to the enolase family. Mg(2+) serves as cofactor.

It is found in the cytoplasm. It localises to the secreted. Its subcellular location is the cell surface. The enzyme catalyses (2R)-2-phosphoglycerate = phosphoenolpyruvate + H2O. It functions in the pathway carbohydrate degradation; glycolysis; pyruvate from D-glyceraldehyde 3-phosphate: step 4/5. Catalyzes the reversible conversion of 2-phosphoglycerate (2-PG) into phosphoenolpyruvate (PEP). It is essential for the degradation of carbohydrates via glycolysis. This chain is Enolase, found in Bacillus pumilus (strain SAFR-032).